The following is a 491-amino-acid chain: UDP-N-acetylmuramate--L-alanine ligase (491 aa).

126 to 132 (GTHGKTT) lines the ATP pocket.

This sequence belongs to the MurCDEF family.

The protein localises to the cytoplasm. It catalyses the reaction UDP-N-acetyl-alpha-D-muramate + L-alanine + ATP = UDP-N-acetyl-alpha-D-muramoyl-L-alanine + ADP + phosphate + H(+). It participates in cell wall biogenesis; peptidoglycan biosynthesis. Functionally, cell wall formation. The chain is UDP-N-acetylmuramate--L-alanine ligase from Escherichia coli (strain SE11).